Here is a 419-residue protein sequence, read N- to C-terminus: Tyrosine--tRNA ligase (419 aa).

Position 34 (Y34) interacts with L-tyrosine. Residues 39–48 (PSGDSMHIGH) carry the 'HIGH' region motif. L-tyrosine is bound by residues Y168 and Q172. The 'KMSKS' region motif lies at 230-234 (KFGKS). K233 contributes to the ATP binding site. The S4 RNA-binding domain occupies 352–418 (ANLVDWLVTL…GKKKYFLVSY (67 aa)).

The protein belongs to the class-I aminoacyl-tRNA synthetase family. TyrS type 1 subfamily. In terms of assembly, homodimer.

It is found in the cytoplasm. The enzyme catalyses tRNA(Tyr) + L-tyrosine + ATP = L-tyrosyl-tRNA(Tyr) + AMP + diphosphate + H(+). Functionally, catalyzes the attachment of tyrosine to tRNA(Tyr) in a two-step reaction: tyrosine is first activated by ATP to form Tyr-AMP and then transferred to the acceptor end of tRNA(Tyr). The sequence is that of Tyrosine--tRNA ligase from Listeria monocytogenes serotype 4a (strain HCC23).